The primary structure comprises 372 residues: Cytochrome b (372 aa).

Transmembrane regions (helical) follow at residues 25–45 (FGSM…FLAV), 69–90 (WMMQ…YIHM), 105–125 (WLSG…GYVL), and 170–190 (FFAL…LHIM). His-75 and His-89 together coordinate heme b. Heme b is bound by residues His-174 and His-188. His-193 contributes to the a ubiquinone binding site. 4 helical membrane passes run 218–238 (YKDL…ISFL), 280–300 (LGGA…PFTH), 312–332 (FMQL…WTAT), and 339–358 (YTTI…MSNL).

It belongs to the cytochrome b family. In terms of assembly, the cytochrome bc1 complex contains 3 respiratory subunits (MT-CYB, CYC1 and UQCRFS1), 2 core proteins (UQCRC1 and UQCRC2) and probably 6 low-molecular weight proteins. Heme b serves as cofactor.

The protein resides in the mitochondrion inner membrane. In terms of biological role, component of the ubiquinol-cytochrome c reductase complex (complex III or cytochrome b-c1 complex) that is part of the mitochondrial respiratory chain. The b-c1 complex mediates electron transfer from ubiquinol to cytochrome c. Contributes to the generation of a proton gradient across the mitochondrial membrane that is then used for ATP synthesis. This chain is Cytochrome b (MT-CYB), found in Sanzinia madagascariensis (Madagascar tree boa).